The following is a 160-amino-acid chain: 2-C-methyl-D-erythritol 2,4-cyclodiphosphate synthase (160 aa).

Residues D10 and H12 each coordinate a divalent metal cation. 4-CDP-2-C-methyl-D-erythritol 2-phosphate is bound by residues 10 to 12 (DVH) and 36 to 37 (HS). Residue H44 participates in a divalent metal cation binding. 4-CDP-2-C-methyl-D-erythritol 2-phosphate is bound by residues 58 to 60 (DIG), 63 to 67 (FPDTD), 102 to 108 (AQAPKMA), 134 to 137 (TTTE), F141, and R144.

It belongs to the IspF family. As to quaternary structure, homotrimer. It depends on a divalent metal cation as a cofactor.

The catalysed reaction is 4-CDP-2-C-methyl-D-erythritol 2-phosphate = 2-C-methyl-D-erythritol 2,4-cyclic diphosphate + CMP. It participates in isoprenoid biosynthesis; isopentenyl diphosphate biosynthesis via DXP pathway; isopentenyl diphosphate from 1-deoxy-D-xylulose 5-phosphate: step 4/6. Involved in the biosynthesis of isopentenyl diphosphate (IPP) and dimethylallyl diphosphate (DMAPP), two major building blocks of isoprenoid compounds. Catalyzes the conversion of 4-diphosphocytidyl-2-C-methyl-D-erythritol 2-phosphate (CDP-ME2P) to 2-C-methyl-D-erythritol 2,4-cyclodiphosphate (ME-CPP) with a corresponding release of cytidine 5-monophosphate (CMP). The protein is 2-C-methyl-D-erythritol 2,4-cyclodiphosphate synthase of Shewanella denitrificans (strain OS217 / ATCC BAA-1090 / DSM 15013).